Consider the following 178-residue polypeptide: Membrane-spanning protein YciB (178 aa).

The next 5 helical transmembrane spans lie at 22-42 (IFIA…ITSI), 52-72 (LINL…HNSS), 76-96 (WKVT…YLFI), 121-141 (LFWS…ILYF), and 151-171 (IFGL…YIYF).

It belongs to the YciB family.

It localises to the cell membrane. Functionally, plays a role in cell envelope biogenesis, maintenance of cell envelope integrity and membrane homeostasis. In Buchnera aphidicola subsp. Baizongia pistaciae (strain Bp), this protein is Membrane-spanning protein YciB.